An 858-amino-acid polypeptide reads, in one-letter code: Ubiquitin carboxyl-terminal hydrolase 5 (858 aa).

Position 2 is an N-acetylalanine (Ala2). Residues 73-98 (LRRTRRPKEEDTSAGTGDPPRKKPTR) form a disordered region. Lys113 is covalently cross-linked (Glycyl lysine isopeptide (Lys-Gly) (interchain with G-Cter in SUMO)). Phosphoserine occurs at positions 149 and 156. The UBP-type; degenerate zinc-finger motif lies at 175-283 (QVSKHAFNLK…EHLSHFGIDM (109 aa)). Residues Cys195 and Cys816 are joined by a disulfide bond. 2 residues coordinate Zn(2+): Cys199 and Cys202. Residue Trp209 participates in substrate binding. Cys219 serves as a coordination point for Zn(2+). 221–224 (RRYF) is a substrate binding site. Residue His232 participates in Zn(2+) binding. Substrate contacts are provided by Tyr259, Tyr261, and Asp264. Thr292 carries the post-translational modification Phosphothreonine. The USP domain occupies 326–856 (TGIRNLGNSC…LGYIYFYQRV (531 aa)). Residue Cys335 is the Nucleophile of the active site. Thr623 carries the post-translational modification Phosphothreonine. UBA domains follow at residues 654 to 695 (MLDE…VMSH) and 722 to 762 (PPPE…IFSH). Residues Ser779, Ser783, and Ser785 each carry the phosphoserine modification. Residue His818 is the Proton acceptor of the active site.

The protein belongs to the peptidase C19 family. In terms of assembly, homodimer. Interacts with TRIML1. In terms of processing, SUMOylated at Lys-113; SUMOylation affects the interaction with Cav3.2 channels. Ubiquitinated by SMURF1; leading to proteasomal degradation.

Its subcellular location is the cytoplasm. The protein resides in the stress granule. It is found in the nucleus. It carries out the reaction Thiol-dependent hydrolysis of ester, thioester, amide, peptide and isopeptide bonds formed by the C-terminal Gly of ubiquitin (a 76-residue protein attached to proteins as an intracellular targeting signal).. In terms of biological role, deubiquitinating enzyme that participates in a wide range of cellular processes by specifically cleaving isopeptide bonds between ubiquitin and substrate proteins or ubiquitin itself. Affects thereby important cellular signaling pathways such as NF-kappa-B, Wnt/beta-catenin, and cytokine production by regulating ubiquitin-dependent protein degradation. Participates in the activation of the Wnt signaling pathway by promoting FOXM1 deubiquitination and stabilization that induces the recruitment of beta-catenin to Wnt target gene promoter. Regulates the assembly and disassembly of heat-induced stress granules by mediating the hydrolysis of unanchored ubiquitin chains. Promotes lipopolysaccharide-induced apoptosis and inflammatory response by stabilizing the TXNIP protein. Affects T-cell biology by stabilizing the inhibitory receptor on T-cells PDC1. Acts as a negative regulator of autophagy by regulating ULK1 at both protein and mRNA levels. Acts also as a negative regulator of type I interferon production by simultaneously removing both 'Lys-48'-linked unanchored and 'Lys-63'-linked anchored polyubiquitin chains on the transcription factor IRF3. Modulates the stability of DNA mismatch repair protein MLH1 and counteracts the effect of the ubiquitin ligase UBR4. Upon activation by insulin, it gets phosphorylated through mTORC1-mediated phosphorylation to enhance YTHDF1 stability by removing 'Lys-11'-linked polyubiquitination. May also deubiquitinate other substrates such as the calcium channel CACNA1H. This is Ubiquitin carboxyl-terminal hydrolase 5 (Usp5) from Mus musculus (Mouse).